The sequence spans 431 residues: Putative F-box/FBD/LRR-repeat protein At4g26350 (431 aa).

Positions 1–47 (MDIISQCPDHLLLRILSFIPTKDVIVTSLLSKRWGSLWRWVPKLEYD) constitute an F-box domain. LRR repeat units lie at residues 52–78 (NMRFVKFVYRSLLQNNAPVLESLHLKN), 85–109 (CRTVDIGGWIDIAVSRRVRELEISI), 132–159 (ILTIKHCHLVDVPLAVCLPSLKKLHLRC), 160–185 (IGWAYNATLLRLISGCTNLEELRLAR), and 309–334 (CTQGWWDLLTHMLQGSPKLRFLTLTN). Residues 348-398 (CWKRPSSVPACLLSSLQAFTWSGYKGRQGDKEVVKYVLRNATGLKKRIFIS) enclose the FBD domain.

The polypeptide is Putative F-box/FBD/LRR-repeat protein At4g26350 (Arabidopsis thaliana (Mouse-ear cress)).